We begin with the raw amino-acid sequence, 435 residues long: Protein GOLM2 (435 aa).

Position 1 is an N-acetylmethionine (M1). Over M1–P14 the chain is Cytoplasmic. The chain crosses the membrane as a helical; Signal-anchor for type II membrane protein span at residues S15–I35. Residues I35 to T194 are a coiled coil. The Lumenal portion of the chain corresponds to S36–L435. 2 stretches are compositionally biased toward basic and acidic residues: residues Q191 to A212 and D223 to K239. Disordered regions lie at residues Q191–K239 and P271–L435. S232 is modified (phosphoserine). Polar residues-rich tracts occupy residues Q282–S294 and H302–L320. Basic and acidic residues predominate over residues A343–D361. S365 is modified (phosphoserine). The segment covering Y398–R417 has biased composition (acidic residues). The span at D425–L435 shows a compositional bias: basic and acidic residues.

It belongs to the GOLM family.

Its subcellular location is the membrane. In Mus musculus (Mouse), this protein is Protein GOLM2.